Here is a 430-residue protein sequence, read N- to C-terminus: Protein translocase subunit SecY (430 aa).

10 helical membrane-spanning segments follow: residues 18–38 (IFFTLAMLVIFKIGTYIPAPG), 68–88 (FSIFAMGIVPYITASIVMQLL), 117–137 (LAISLAFIQSIGMAFQFNNYL), 147–167 (IMSYLLIALVLTAGTAFLIWL), 179–199 (GISIIIFAGILSTLPASLIQF), 217–237 (VLGLLVSLILLTVGAIYVLEA), 269–289 (GVIPVIFAMAFFLLPRTLTLF), 308–328 (NVGMVVYIVLIILFTYFYAFV), 368–388 (FVGSIFLAVISILPILATKFM), and 389–409 (GLPQSIQIGGTSLLIVIGVAI).

This sequence belongs to the SecY/SEC61-alpha family. Component of the Sec protein translocase complex. Heterotrimer consisting of SecY, SecE and SecG subunits. The heterotrimers can form oligomers, although 1 heterotrimer is thought to be able to translocate proteins. Interacts with the ribosome. Interacts with SecDF, and other proteins may be involved. Interacts with SecA.

Its subcellular location is the cell membrane. The central subunit of the protein translocation channel SecYEG. Consists of two halves formed by TMs 1-5 and 6-10. These two domains form a lateral gate at the front which open onto the bilayer between TMs 2 and 7, and are clamped together by SecE at the back. The channel is closed by both a pore ring composed of hydrophobic SecY resides and a short helix (helix 2A) on the extracellular side of the membrane which forms a plug. The plug probably moves laterally to allow the channel to open. The ring and the pore may move independently. In Staphylococcus aureus (strain NCTC 8325 / PS 47), this protein is Protein translocase subunit SecY.